Here is a 233-residue protein sequence, read N- to C-terminus: Mediator of RNA polymerase II transcription subunit 7 (233 aa).

Residue lysine 185 forms a Glycyl lysine isopeptide (Lys-Gly) (interchain with G-Cter in SUMO1); alternate linkage. Lysine 185 participates in a covalent cross-link: Glycyl lysine isopeptide (Lys-Gly) (interchain with G-Cter in SUMO2); alternate. Residues glutamate 187–aspartate 213 are disordered. At serine 194 the chain carries Phosphoserine. Over residues glutamate 202–aspartate 213 the composition is skewed to basic and acidic residues.

The protein belongs to the Mediator complex subunit 7 family. In terms of assembly, component of the Mediator complex, which is composed of MED1, MED4, MED6, MED7, MED8, MED9, MED10, MED11, MED12, MED13, MED13L, MED14, MED15, MED16, MED17, MED18, MED19, MED20, MED21, MED22, MED23, MED24, MED25, MED26, MED27, MED29, MED30, MED31, CCNC, CDK8 and CDC2L6/CDK11. The MED12, MED13, CCNC and CDK8 subunits form a distinct module termed the CDK8 module. Mediator containing the CDK8 module is less active than Mediator lacking this module in supporting transcriptional activation. Individual preparations of the Mediator complex lacking one or more distinct subunits have been variously termed ARC, CRSP, DRIP, PC2, SMCC and TRAP. In terms of processing, constitutively sumoylated.

It localises to the nucleus. Functionally, component of the Mediator complex, a coactivator involved in the regulated transcription of nearly all RNA polymerase II-dependent genes. Mediator functions as a bridge to convey information from gene-specific regulatory proteins to the basal RNA polymerase II transcription machinery. Mediator is recruited to promoters by direct interactions with regulatory proteins and serves as a scaffold for the assembly of a functional preinitiation complex with RNA polymerase II and the general transcription factors. The sequence is that of Mediator of RNA polymerase II transcription subunit 7 (MED7) from Homo sapiens (Human).